The following is a 422-amino-acid chain: Serine hydroxymethyltransferase (422 aa).

(6S)-5,6,7,8-tetrahydrofolate-binding positions include Leu-120 and Gly-124–Leu-126. At Lys-228 the chain carries N6-(pyridoxal phosphate)lysine.

It belongs to the SHMT family. As to quaternary structure, homodimer. Requires pyridoxal 5'-phosphate as cofactor.

The protein localises to the cytoplasm. It catalyses the reaction (6R)-5,10-methylene-5,6,7,8-tetrahydrofolate + glycine + H2O = (6S)-5,6,7,8-tetrahydrofolate + L-serine. The protein operates within one-carbon metabolism; tetrahydrofolate interconversion. It participates in amino-acid biosynthesis; glycine biosynthesis; glycine from L-serine: step 1/1. Functionally, catalyzes the reversible interconversion of serine and glycine with tetrahydrofolate (THF) serving as the one-carbon carrier. This reaction serves as the major source of one-carbon groups required for the biosynthesis of purines, thymidylate, methionine, and other important biomolecules. Also exhibits THF-independent aldolase activity toward beta-hydroxyamino acids, producing glycine and aldehydes, via a retro-aldol mechanism. This chain is Serine hydroxymethyltransferase, found in Actinobacillus succinogenes (strain ATCC 55618 / DSM 22257 / CCUG 43843 / 130Z).